Here is a 356-residue protein sequence, read N- to C-terminus: Trans-enoyl reductase pgmF (356 aa).

Residues 57 to 60, 175 to 178, 198 to 201, Tyr216, 261 to 262, and 342 to 343 contribute to the NADP(+) site; these read VDFK, SGGC, STPN, VG, and AK.

Belongs to the zinc-containing alcohol dehydrogenase family.

Its function is as follows. FAD-linked oxidoreductase; part of the gene cluster that mediates the biosynthesis of pleosporalin A, ascomycone A, as well as a third cryptic naphthoquinone derived pigment, all responsible for the coloration of conidia. The pathway begins with the biosynthesis of the cyclized heptaketide 3-acetonyl-1,6,8-trihydroxy-2-naphthaldehyde by the NR-PKS pgmA. The C-6 hydroxyl group is further methylated by the O-methyltransferase pgmB to yield fusarubinaldehyde which is in turn oxidized by the cytochrome P450 monooxygenase pgmC at C-9. The C-1 hydroxyl group is then methylated spontaneously. Although pgmE, pgmD and pgmH are essential for the production of pleosporalin A, it is not the case for the 2 other final products and it remains difficult to assign a specific function to each enzyme. PgmF and pgmG seem not to be involved in pigment biosynthesis although they were regulated by the cluster-specific transcription factor pgmR. This chain is Trans-enoyl reductase pgmF, found in Aspergillus terreus (strain NIH 2624 / FGSC A1156).